A 308-amino-acid polypeptide reads, in one-letter code: Putative gluconeogenesis factor (308 aa).

The protein belongs to the gluconeogenesis factor family.

The protein resides in the cytoplasm. Functionally, required for morphogenesis under gluconeogenic growth conditions. In Pasteurella multocida (strain Pm70), this protein is Putative gluconeogenesis factor.